We begin with the raw amino-acid sequence, 156 residues long: 6,7-dimethyl-8-ribityllumazine synthase (156 aa).

Residues Phe23, 57-59, and 81-83 contribute to the 5-amino-6-(D-ribitylamino)uracil site; these read AYE and AII. 86–87 serves as a coordination point for (2S)-2-hydroxy-3-oxobutyl phosphate; the sequence is GT. The Proton donor role is filled by His89. Phe114 is a binding site for 5-amino-6-(D-ribitylamino)uracil. Arg128 provides a ligand contact to (2S)-2-hydroxy-3-oxobutyl phosphate.

It belongs to the DMRL synthase family.

The catalysed reaction is (2S)-2-hydroxy-3-oxobutyl phosphate + 5-amino-6-(D-ribitylamino)uracil = 6,7-dimethyl-8-(1-D-ribityl)lumazine + phosphate + 2 H2O + H(+). It functions in the pathway cofactor biosynthesis; riboflavin biosynthesis; riboflavin from 2-hydroxy-3-oxobutyl phosphate and 5-amino-6-(D-ribitylamino)uracil: step 1/2. Catalyzes the formation of 6,7-dimethyl-8-ribityllumazine by condensation of 5-amino-6-(D-ribitylamino)uracil with 3,4-dihydroxy-2-butanone 4-phosphate. This is the penultimate step in the biosynthesis of riboflavin. This is 6,7-dimethyl-8-ribityllumazine synthase from Helicobacter pylori (strain ATCC 700392 / 26695) (Campylobacter pylori).